A 667-amino-acid polypeptide reads, in one-letter code: Probable potassium transport system protein Kup (667 aa).

Transmembrane regions (helical) follow at residues 16-36, 58-78, 101-121, 146-166, 167-187, 221-241, 253-273, 294-314, 343-363, 373-393, 399-419, and 431-451; these read GFII…LYTM, VSLI…LIAL, WLII…ALTP, TNVI…QRFG, TGVI…VLGI, IFIL…YSDL, WPFV…WILA, VYLV…LISG, LYIP…VLYF, YGLA…YYLI, PLLA…FFLA, and VVVL…GTVI.

Belongs to the HAK/KUP transporter (TC 2.A.72) family.

It is found in the cell membrane. The catalysed reaction is K(+)(in) + H(+)(in) = K(+)(out) + H(+)(out). Transport of potassium into the cell. Likely operates as a K(+):H(+) symporter. This Streptococcus equi subsp. zooepidemicus (strain H70) protein is Probable potassium transport system protein Kup.